The sequence spans 1219 residues: Myosin-5 (1219 aa).

Residues 1–12 (MAILKRGARKKV) show a composition bias toward basic residues. Residues 1 to 20 (MAILKRGARKKVHQEPAKRS) are disordered. Residues 36–715 (VGVSDLTLLS…TLFALEHMRD (680 aa)) form the Myosin motor domain. 129 to 136 (GESGAGKT) is an ATP binding site. Position 357 is a phosphoserine (S357). A Phosphotyrosine modification is found at Y359. The actin-binding stretch occupies residues 404-486 (SIGILDIYGF…PGIFAAMNDS (83 aa)). IQ domains lie at 719–739 (HNMAARIQRAWRRFLQRRIDA) and 740–765 (ATKIQRTIRERKEGNKYEKLRDYGTK). In terms of domain architecture, TH1 spans 771–961 (KERRSMSLLG…TISVRRGNPP (191 aa)). The residue at position 777 (S777) is a Phosphoserine. The segment covering 951 to 964 (STISVRRGNPPNSQ) has biased composition (polar residues). Disordered stretches follow at residues 951–1106 (STIS…SELP) and 1139–1167 (TAYMKPHSGNNNIPTPPQNRDVPKPVLNS). Low complexity predominate over residues 974–984 (SISSGYHASSS). Position 992 is a phosphoserine (S992). A compositionally biased stretch (polar residues) spans 1030 to 1041 (NPASTLTASQSN). Positions 1048–1063 (TAATRATPAATPAAAA) are enriched in low complexity. Residues 1072-1083 (IPPPPPPPPPSS) show a composition bias toward pro residues. In terms of domain architecture, SH3 spans 1085 to 1147 (PKEPMFEAAY…PTAYMKPHSG (63 aa)). The residue at position 1205 (S1205) is a Phosphoserine.

This sequence belongs to the TRAFAC class myosin-kinesin ATPase superfamily. Myosin family. As to quaternary structure, interacts (via myosin motor domain) with SHE4; this interaction is important for proper localization and may regulate the interaction of the motor domain with actin. Interacts (via SH3 domain) with VRP1; this interaction is required for localization to sites of polarized growth and may regulate the interaction of the tail domain with actin. Interacts (via SH3 domain) with PAN1; this interaction is important for late stages of endocytopsis. Interacts (via SH3 domain) with BBC1 and LAS17. Interacts (via C-terminal acidic tail) with ARC19 and ARC40; ARC19 and ARC40 are Arp2/3 complex subunits. Interacts with BZZ1, PKH1, PKH2, YPK1 and YPK2. Post-translationally, phosphorylation of the TEDS site (Ser-357) is required for the polarization of the actin cytoskeleton and for ligand-induced, but not for constitutive internalization of STE2. Phosphorylation probably activates the myosin-I ATPase activity. Ser-357 is phosphorylated by YPK2 in vitro.

It localises to the cytoplasm. It is found in the cytoskeleton. The protein resides in the actin patch. One of two redundant type-I myosins implicated in the organization of the actin cytoskeleton. Required for proper actin cytoskeleton polarization and for the internalization step in endocytosis. At the cell cortex, assembles in patch-like structures together with proteins from the actin-polymerizing machinery and promotes actin assembly. Functions redundantly with LAS17 as actin nucleation-promoting factor (NPF) for the Arp2/3 complex. Motor domain phosphorylation by PAK kinases CLA4 and STE20 promotes CDC42-regulated actin assembly. Functions together with the NPF PAN1 in late stages of endocytosis. Motor domain phosphorylation by PDK1 kinases PKH1 and PKH2, and by SGK kinases YPK1 and YPK2, promotes ligand-induced, but not constitutive endocytosis of the G protein-coupled receptor STE2. This is Myosin-5 (MYO5) from Saccharomyces cerevisiae (strain YJM789) (Baker's yeast).